The chain runs to 194 residues: MIKKLGGNLALFDREMDNFKGVTIKLTIFRDGKKLEQSVDLYDVNNNKIAKMINFGGAVFFESDDYFSNKSGIPLKALSVASVQAGSSFSSIPTFFNKDYKNVYRLQIFEMKDLALTNLDDLVKFLPVITKQKFITVRFRNYQPYYANFGYNELIASHNDMIADITLDSVDTKPYLLKYNTISHDWDMENIKLQ.

This is an uncharacterized protein from Rickettsia prowazekii (strain Madrid E).